Reading from the N-terminus, the 331-residue chain is Aspartate carbamoyltransferase catalytic subunit (331 aa).

The carbamoyl phosphate site is built by R76 and T77. Residue K104 coordinates L-aspartate. Carbamoyl phosphate is bound by residues R126, H154, and Q157. L-aspartate-binding residues include R187 and R246. Carbamoyl phosphate is bound by residues G287 and P288.

This sequence belongs to the aspartate/ornithine carbamoyltransferase superfamily. ATCase family. Heterododecamer (2C3:3R2) of six catalytic PyrB chains organized as two trimers (C3), and six regulatory PyrI chains organized as three dimers (R2).

It catalyses the reaction carbamoyl phosphate + L-aspartate = N-carbamoyl-L-aspartate + phosphate + H(+). Its pathway is pyrimidine metabolism; UMP biosynthesis via de novo pathway; (S)-dihydroorotate from bicarbonate: step 2/3. Functionally, catalyzes the condensation of carbamoyl phosphate and aspartate to form carbamoyl aspartate and inorganic phosphate, the committed step in the de novo pyrimidine nucleotide biosynthesis pathway. The chain is Aspartate carbamoyltransferase catalytic subunit from Dehalococcoides mccartyi (strain ATCC BAA-2100 / JCM 16839 / KCTC 5957 / BAV1).